A 504-amino-acid chain; its full sequence is Anaerobic nitric oxide reductase transcription regulator NorR (504 aa).

D57 is subject to 4-aspartylphosphate. Positions 187–416 (MIGLSPGMTQ…LEHAIHRAVV (230 aa)) constitute a Sigma-54 factor interaction domain. ATP is bound by residues 215 to 222 (GETGTGKE) and 278 to 287 (ADNGTLFLDE). A DNA-binding region (H-T-H motif) is located at residues 479–498 (WAASARMLETDVANLHRLAK).

It participates in nitrogen metabolism; nitric oxide reduction. Its function is as follows. Required for the expression of anaerobic nitric oxide (NO) reductase, acts as a transcriptional activator for at least the norVW operon. Activation also requires sigma-54. This chain is Anaerobic nitric oxide reductase transcription regulator NorR, found in Escherichia coli O7:K1 (strain IAI39 / ExPEC).